A 150-amino-acid chain; its full sequence is 3-dehydroquinate dehydratase (150 aa).

The active-site Proton acceptor is the Tyr-26. 3 residues coordinate substrate: Asn-75, His-81, and Asp-88. The Proton donor role is filled by His-101. Residues Leu-102 to Ser-103 and Arg-112 contribute to the substrate site.

This sequence belongs to the type-II 3-dehydroquinase family. In terms of assembly, homododecamer.

The catalysed reaction is 3-dehydroquinate = 3-dehydroshikimate + H2O. It participates in metabolic intermediate biosynthesis; chorismate biosynthesis; chorismate from D-erythrose 4-phosphate and phosphoenolpyruvate: step 3/7. Its function is as follows. Catalyzes a trans-dehydration via an enolate intermediate. The protein is 3-dehydroquinate dehydratase of Shewanella loihica (strain ATCC BAA-1088 / PV-4).